The sequence spans 131 residues: Snaclec alboaggregin-A subunit alpha (131 aa).

The 131-residue stretch at 1-131 (DCPSDWSSYD…EYPFVCKFXR (131 aa)) folds into the C-type lectin domain. 3 cysteine pairs are disulfide-bonded: cysteine 2-cysteine 13, cysteine 30-cysteine 127, and cysteine 102-cysteine 119.

The protein belongs to the snaclec family. In terms of assembly, heterotetramer of the subunits alpha, alpha', beta and beta'; disulfide-linked. As to expression, expressed by the venom gland.

It localises to the secreted. Functionally, potent platelet activator that aggregates platelets via both GPIbalpha (GP1BA) and GPVI (GP6). Induces a tyrosine phosphorylation profile in platelets that resembles this produced by collagen, involving the time dependent tyrosine phosphorylation of Fc receptor gamma chain (FCGR1A), phospholipase Cgamma2 (PLCG2), and LAT. The chain is Snaclec alboaggregin-A subunit alpha from Trimeresurus albolabris (White-lipped pit viper).